We begin with the raw amino-acid sequence, 446 residues long: Glutamyl-tRNA reductase (446 aa).

Substrate contacts are provided by residues 49 to 52, S109, 114 to 116, and Q120; these read TCNR and ETQ. C50 serves as the catalytic Nucleophile. Residue 189-194 coordinates NADP(+); it reads GAGKMG.

It belongs to the glutamyl-tRNA reductase family. In terms of assembly, homodimer.

It carries out the reaction (S)-4-amino-5-oxopentanoate + tRNA(Glu) + NADP(+) = L-glutamyl-tRNA(Glu) + NADPH + H(+). It participates in porphyrin-containing compound metabolism; protoporphyrin-IX biosynthesis; 5-aminolevulinate from L-glutamyl-tRNA(Glu): step 1/2. Catalyzes the NADPH-dependent reduction of glutamyl-tRNA(Glu) to glutamate 1-semialdehyde (GSA). In Priestia megaterium (Bacillus megaterium), this protein is Glutamyl-tRNA reductase.